Reading from the N-terminus, the 568-residue chain is UPF0313 protein FN0734 (568 aa).

Residues 289 to 562 (ALDTIKYSVT…KQKQKDIVTE (274 aa)) form the Radical SAM core domain. [4Fe-4S] cluster is bound by residues Cys-303, Cys-307, and Cys-310. Positions 546–568 (VEKDNGKKQKQKDIVTEKRKNRK) are disordered.

The protein belongs to the UPF0313 family. The cofactor is [4Fe-4S] cluster.

This Fusobacterium nucleatum subsp. nucleatum (strain ATCC 25586 / DSM 15643 / BCRC 10681 / CIP 101130 / JCM 8532 / KCTC 2640 / LMG 13131 / VPI 4355) protein is UPF0313 protein FN0734.